The following is a 391-amino-acid chain: MSRFLICSFALVLLYPAGIDMYLVGLPRIAADLNASEAQLHIAFSVYLAGMAAAMLFAGKVADRSGRKPVAIPGAALFIIASVFCSLAETSALFLAGRFLQGLGAGCCYVVAFAILRDTLDDRRRAKVLSLLNGITCIIPVLAPVLGHLIMLKFPWQSLFWTMATMGIAVLMLSLFILKETRPAAPTTSDKPRENSESLLNRFFLSRVVITTLSVSVILTFVNTSPVLLMEIMGFERGEYATIMALTAGVSMTVSFSTPFALGIFKPRTLMITSQVLFLAAGITLAVSPSHAVSLFGITLICAGFSVGFGVAMSQALGPFSLRAGVASSTLGIAQVCGSSLWIWLAAVVGIGAWNMLIGILIACSIVSLLLIMFVAPGRPVAAHEEIHHHA.

The next 12 helical transmembrane spans lie at 4 to 24 (FLIC…MYLV), 42 to 62 (IAFS…GKVA), 69 to 89 (PVAI…SLAE), 93 to 113 (LFLA…VVAF), 131 to 151 (LLNG…HLIM), 158 to 178 (SLFW…LFIL), 203 to 222 (FFLS…LTFV), 245 to 265 (ALTA…LGIF), 269 to 289 (TLMI…AVSP), 293 to 313 (VSLF…GVAM), 331 to 351 (LGIA…VVGI), and 356 to 376 (MLIG…MFVA).

It belongs to the major facilitator superfamily. DHA1 family. MdtL (TC 2.A.1.2.22) subfamily.

It localises to the cell inner membrane. Confers resistance to chloramphenicol. The sequence is that of Multidrug resistance protein MdtL from Escherichia coli O127:H6 (strain E2348/69 / EPEC).